A 388-amino-acid polypeptide reads, in one-letter code: MLSSIKPSSSSFSTAISGSVRRSIPTKLKFSPLLIIKNCHNQSFNANVVSHQKPLHISSASNFKREVKVEAYEADRSRPLDINIELPDEQSAQKLKIGIYFATWWALNVVFNIYNKKVLNAFPYPWLTSTLSLACGSLMMLVSWATRIADAPKTDLEFWKTLFPVAVAHTIGHVAATVSMSKVAVSFTHIIKSGEPAFSVLVSRFFMGETFPLPVYLSLLPIIGGCALAAITELNFNITGFMGAMISNLAFVFRNIFSKKGMKGKSVSGMNYYACLSMMSLVILTPFSIAVEGPQMWAAGWQNAVSQVGPNFVWWVVAQSVFYHLYNQVSYMSLDQISPLTFSIGNTMKRISVIVASIIIFHTPIQPVNALGAAIAIFGTFLYSQAKQ.

The N-terminal 68 residues, 1–68, are a transit peptide targeting the chloroplast; it reads MLSSIKPSSS…SASNFKREVK (68 aa). The next 8 membrane-spanning stretches (helical) occupy residues 95 to 115, 122 to 142, 158 to 178, 211 to 231, 233 to 253, 281 to 301, 305 to 325, and 358 to 378; these read LKIG…NIYN, FPYP…MMLV, FWKT…AATV, FPLP…LAAI, ELNF…AFVF, LVIL…AAGW, VSQV…FYHL, and IIIF…IAIF. The EamA domain maps to 113 to 231; that stretch reads IYNKKVLNAF…IIGGCALAAI (119 aa).

It belongs to the TPT transporter family. GPT (TC 2.A.7.9) subfamily. As to expression, expressed in seeds, flowers, stamens, and rosette leaves, with highest levels found in sepals and senescing leaves.

Its subcellular location is the plastid. It localises to the chloroplast membrane. Its function is as follows. Glucose 6-phosphate (Glc6P) transporter. Also transports inorganic phosphate, 3-phosphoglycerate, triose phosphates and, to a leser extent, phosphoenolpyruvate. Responsible for the transport of Glc6P into plastids of heterotrophic tissues where it can be used as a carbon source for starch biosynthesis, as substrate for fatty acid biosynthesis or as substrate for NADPH generation via the oxidative pentose phosphate pathway (OPPP). Required for dynamic acclimation of photosynthesis and partitioning of Glc6P between the chloroplast and the cytosol. May modulate the sensing of sugar status during early seedling development. The protein is Glucose-6-phosphate/phosphate translocator 2, chloroplastic of Arabidopsis thaliana (Mouse-ear cress).